Reading from the N-terminus, the 870-residue chain is NEDD4-like E3 ubiquitin-protein ligase WWP2 (870 aa).

One can recognise a C2 domain in the interval 1 to 117 (MASASSSRAG…KNNGGKMENT (117 aa)). The interval 150 to 300 (SVPNGSAVTD…QLPAAAQAPD (151 aa)) is disordered. Positions 152–171 (PNGSAVTDGSQPPSRESSGT) are enriched in polar residues. The span at 198–208 (GGSARTATAAS) shows a compositional bias: low complexity. The residue at position 211 (Ser-211) is a Phosphoserine. Polar residues-rich tracts occupy residues 222-235 (VKNSSSSGLANGTV) and 262-289 (SVSSNPNTTSLPAQSTPAEGEEASTSGT). The segment covering 290-300 (QQLPAAAQAPD) has biased composition (low complexity). WW domains are found at residues 300-333 (DALPAGWEQRELPNGRVYYVDHNTKTTTWERPLP), 330-363 (RPLPPGWEKRTDPRGRFYYVDHNTRTTTWQRPTA), 405-437 (GPLPPGWEKRQDNGRVYYVNHNTRTTQWEDPRT), and 444-477 (PALPPGWEMKYTSEGVRYFVDHNTRTTTFKDPRP). One can recognise an HECT domain in the interval 536–870 (KPYDLRRRLY…IEETEGFGQE (335 aa)). Cys-838 functions as the Glycyl thioester intermediate in the catalytic mechanism.

In terms of assembly, interacts with SCNN1A, SCNN1B, SCNN1G, WBP1, WBP2 and ATN1. Interacts with ERBB4, NDFIP1 and NDFIP2. Interacts with ARRDC4. Interacts with POU5F1, RBP1, EGR2 and SLC11A2. Interacts (via WW domains) with ARRDC1 (via PPxY motifs); ubiquitinates ARRDC1. Interacts (via WW domains) with ARRDC2 and ARRDC3. In terms of processing, autoubiquitinated. Ubiquitinated by the SCF(FBXL15) complex, leading to its degradation by the proteasome.

Its subcellular location is the nucleus. The enzyme catalyses S-ubiquitinyl-[E2 ubiquitin-conjugating enzyme]-L-cysteine + [acceptor protein]-L-lysine = [E2 ubiquitin-conjugating enzyme]-L-cysteine + N(6)-ubiquitinyl-[acceptor protein]-L-lysine.. It functions in the pathway protein modification; protein ubiquitination. Activated by NDFIP1- and NDFIP2-binding. In terms of biological role, E3 ubiquitin-protein ligase which accepts ubiquitin from an E2 ubiquitin-conjugating enzyme in the form of a thioester and then directly transfers the ubiquitin to targeted substrates. Polyubiquitinates POU5F1 by 'Lys-63'-linked conjugation and promotes it to proteasomal degradation; regulates POU5F1 protein level during differentiation of embryonal carcinoma cells (ECCs) but not in undifferentiated ECCs and embryonic stem cells (ESCs). Ubiquitinates EGR2 and promotes it to proteasomal degradation; in T-cells the ubiquitination inhibits activation-induced cell death. Ubiquitinates SLC11A2; the ubiquitination is enhanced by presence of NDFIP1 and NDFIP2. Ubiquitinates RPB1 and promotes it to proteasomal degradation. The chain is NEDD4-like E3 ubiquitin-protein ligase WWP2 (Wwp2) from Mus musculus (Mouse).